A 198-amino-acid chain; its full sequence is uncharacterized protein (198 aa).

The tract at residues 40–111 is disordered; sequence GSALPPQAPT…LSRGAGQGAP (72 aa). The segment covering 60-74 has biased composition (low complexity); it reads SSRTPGPRPPRSTLR.

This is an uncharacterized protein from Homo sapiens (Human).